A 70-amino-acid chain; its full sequence is ATP synthase subunit epsilon, mitochondrial (70 aa).

It belongs to the eukaryotic ATPase epsilon family. As to quaternary structure, F-type ATPases have 2 components, CF(1) - the catalytic core - and CF(0) - the membrane proton channel. CF(1) has five subunits: alpha(3), beta(3), gamma(1), delta(1), epsilon(1). CF(0) has three main subunits: a, b and c.

The protein localises to the mitochondrion. It is found in the mitochondrion inner membrane. Its function is as follows. Mitochondrial membrane ATP synthase (F(1)F(0) ATP synthase or Complex V) produces ATP from ADP in the presence of a proton gradient across the membrane which is generated by electron transport complexes of the respiratory chain. F-type ATPases consist of two structural domains, F(1) - containing the extramembraneous catalytic core, and F(0) - containing the membrane proton channel, linked together by a central stalk and a peripheral stalk. During catalysis, ATP synthesis in the catalytic domain of F(1) is coupled via a rotary mechanism of the central stalk subunits to proton translocation. Part of the complex F(1) domain and of the central stalk which is part of the complex rotary element. Rotation of the central stalk against the surrounding alpha(3)beta(3) subunits leads to hydrolysis of ATP in three separate catalytic sites on the beta subunits. This Ipomoea batatas (Sweet potato) protein is ATP synthase subunit epsilon, mitochondrial.